Reading from the N-terminus, the 398-residue chain is Phosphoglycerate kinase (398 aa).

Residues 23–25 (DFN), Arg38, 61–64 (HMGK), Arg122, and Arg155 contribute to the substrate site. ATP-binding positions include Lys206, Gly297, Glu328, and 354-357 (GGDS).

Belongs to the phosphoglycerate kinase family. In terms of assembly, monomer.

It localises to the cytoplasm. It catalyses the reaction (2R)-3-phosphoglycerate + ATP = (2R)-3-phospho-glyceroyl phosphate + ADP. It functions in the pathway carbohydrate degradation; glycolysis; pyruvate from D-glyceraldehyde 3-phosphate: step 2/5. This is Phosphoglycerate kinase from Clostridium botulinum (strain 657 / Type Ba4).